The sequence spans 206 residues: Small ribosomal subunit protein uS4 (206 aa).

The 61-residue stretch at 96–156 (GRLDNVVYRM…EKAKKQSRVK (61 aa)) folds into the S4 RNA-binding domain.

The protein belongs to the universal ribosomal protein uS4 family. In terms of assembly, part of the 30S ribosomal subunit. Contacts protein S5. The interaction surface between S4 and S5 is involved in control of translational fidelity.

One of the primary rRNA binding proteins, it binds directly to 16S rRNA where it nucleates assembly of the body of the 30S subunit. Functionally, with S5 and S12 plays an important role in translational accuracy. This is Small ribosomal subunit protein uS4 from Yersinia enterocolitica serotype O:8 / biotype 1B (strain NCTC 13174 / 8081).